A 110-amino-acid chain; its full sequence is Protein NATD1 (110 aa).

The region spanning 19-109 (EHDRQRRQFS…PLPQYLERLQ (91 aa)) is the N-acetyltransferase domain.

It belongs to the NATD1 family. In terms of tissue distribution, expressed in the heart, testis, kidney and lung.

This chain is Protein NATD1 (Natd1), found in Mus musculus (Mouse).